The primary structure comprises 243 residues: Small ribosomal subunit protein uS3 (243 aa).

Residues I39–E110 form the KH type-2 domain. The segment at D215–K243 is disordered. Residues Q233–K243 are compositionally biased toward basic and acidic residues.

It belongs to the universal ribosomal protein uS3 family. In terms of assembly, part of the 30S ribosomal subunit. Forms a tight complex with proteins S10 and S14.

Binds the lower part of the 30S subunit head. Binds mRNA in the 70S ribosome, positioning it for translation. The protein is Small ribosomal subunit protein uS3 of Prochlorococcus marinus (strain MIT 9211).